The sequence spans 605 residues: Probable Xaa-Pro aminopeptidase P (605 aa).

Mn(2+)-binding residues include Asp402, Asp413, Glu511, and Glu525.

It belongs to the peptidase M24B family. Mn(2+) serves as cofactor.

It carries out the reaction Release of any N-terminal amino acid, including proline, that is linked to proline, even from a dipeptide or tripeptide.. In terms of biological role, catalyzes the removal of a penultimate prolyl residue from the N-termini of peptides. This is Probable Xaa-Pro aminopeptidase P (AMPP) from Leptosphaeria maculans (strain JN3 / isolate v23.1.3 / race Av1-4-5-6-7-8) (Blackleg fungus).